We begin with the raw amino-acid sequence, 511 residues long: Cobyric acid synthase (511 aa).

The region spanning Leu251–Phe443 is the GATase cobBQ-type domain. The active-site Nucleophile is the Cys332. The active site involves His435.

Belongs to the CobB/CobQ family. CobQ subfamily.

It participates in cofactor biosynthesis; adenosylcobalamin biosynthesis. Its function is as follows. Catalyzes amidations at positions B, D, E, and G on adenosylcobyrinic A,C-diamide. NH(2) groups are provided by glutamine, and one molecule of ATP is hydrogenolyzed for each amidation. In Listeria monocytogenes serotype 4a (strain HCC23), this protein is Cobyric acid synthase.